Consider the following 519-residue polypeptide: Laccase-2 (519 aa).

Positions 1-20 (MGLQRFSFFVTLALVARSLA) are cleaved as a signal peptide. Plastocyanin-like domains lie at 22 to 147 (IGPV…FVVY) and 159 to 301 (VDNE…ILRY). Residue N74 is glycosylated (N-linked (GlcNAc...) asparagine). Cu cation-binding residues include H84, H86, H129, and H131. 2 disulfides stabilise this stretch: C105–C508 and C137–C225. N-linked (GlcNAc...) asparagine glycans are attached at residues N161, N228, N237, N271, N353, and N361. The Plastocyanin-like 3 domain occupies 368–490 (TVPVLLQILS…AGFAIVFAED (123 aa)). Cu cation-binding residues include H415, H418, and H420. The N-linked (GlcNAc...) asparagine glycan is linked to N456. Residues H472, C473, H474, and H478 each contribute to the Cu cation site.

This sequence belongs to the multicopper oxidase family. It depends on Cu cation as a cofactor.

It is found in the secreted. The catalysed reaction is 4 hydroquinone + O2 = 4 benzosemiquinone + 2 H2O. Functionally, lignin degradation and detoxification of lignin-derived products. The sequence is that of Laccase-2 (LCC2) from Trametes versicolor (White-rot fungus).